A 290-amino-acid chain; its full sequence is Potassium-transporting ATPase subunit beta (290 aa).

Over Met-1–Arg-36 the chain is Cytoplasmic. The chain crosses the membrane as a helical; Signal-anchor for type II membrane protein span at residues Trp-37–Leu-57. The Extracellular portion of the chain corresponds to Cys-58 to Gln-290. 5 N-linked (GlcNAc...) asparagine glycosylation sites follow: Asn-99, Asn-103, Asn-130, Asn-146, and Asn-161. The cysteines at positions 131 and 152 are disulfide-linked. A disulfide bridge connects residues Cys-162 and Cys-178. Residues Asn-193 and Asn-221 are each glycosylated (N-linked (GlcNAc...) asparagine). The immunoglobulin-like stretch occupies residues Ser-194–Gln-290. Residues Cys-201 and Cys-262 are joined by a disulfide bond.

This sequence belongs to the X(+)/potassium ATPases subunit beta family. As to quaternary structure, the ATPase pump is composed of two subunits: alpha (catalytic) and beta (regulatory). Interacts with alpha subunit ATP12A; this interaction is required for the formation of a functionally active pump and targeting at the plasma membrane. Interacts (via N-terminus) with alpha subunit ATP4A (via the P-domain). N-glycosylation is necessary for assembly and functional expression of the pump at the plasma membrane.

The protein resides in the apical cell membrane. It localises to the cell membrane. Its function is as follows. The beta subunit of the gastric H(+)/K(+) ATPase pump which transports H(+) ions in exchange for K(+) ions across the apical membrane of parietal cells. Plays a structural and regulatory role in the assembly and membrane targeting of a functionally active pump. Within a transport cycle, the transfer of a H(+) ion across the membrane is coupled to ATP hydrolysis and is associated with a transient phosphorylation of the alpha subunit that shifts the pump conformation from inward-facing (E1) to outward-facing state (E2). Interacts with the phosphorylation domain of the alpha subunit and functions as a ratchet, stabilizing the lumenal-open E2 conformation and preventing the reverse reaction of the transport cycle. The protein is Potassium-transporting ATPase subunit beta (ATP4B) of Canis lupus familiaris (Dog).